Reading from the N-terminus, the 121-residue chain is UPF0102 protein DSY2577 (121 aa).

It belongs to the UPF0102 family.

This chain is UPF0102 protein DSY2577, found in Desulfitobacterium hafniense (strain Y51).